The sequence spans 133 residues: IgW chain C region, secreted form 2 (133 aa).

Residues 1–71 (VISGFYPDSV…TGSRFNDRIS (71 aa)) enclose the Ig-like domain. N-linked (GlcNAc...) asparagine glycans are attached at residues Asn-32 and Asn-112. The tract at residues 76-133 (KGGTVNLPVPGGNTPCTCPPSSCSGCMPKLVYQTDLNVTLENGGQLQYNCHQQACKIK) is secretory tail.

In terms of tissue distribution, expressed mainly in lymphoid tissues including spleen, epigonal organ and circulating lymphocytes.

The protein localises to the secreted. The chain is IgW chain C region, secreted form 2 from Heterodontus francisci (Horn shark).